A 253-amino-acid chain; its full sequence is Mediator of RNA polymerase II transcription subunit 10 (253 aa).

3 disordered regions span residues 32 to 63 (YDTN…HASS), 88 to 109 (LPSS…TELE), and 206 to 253 (VEAT…QSGQ). Residues 34–47 (TNPSSSNNNTPTSS) show a composition bias toward low complexity. The span at 50 to 60 (SGGGGGGGGGH) shows a compositional bias: gly residues. Low complexity predominate over residues 88 to 104 (LPSSPSSGPSNNQPQQG). Positions 231–253 (SAGGEGQQGQGQGQQGQGQQSGQ) are enriched in gly residues.

The protein belongs to the Mediator complex subunit 10 family. Component of the Mediator complex.

It localises to the nucleus. Its function is as follows. Component of the Mediator complex, a coactivator involved in the regulated transcription of nearly all RNA polymerase II-dependent genes. Mediator functions as a bridge to convey information from gene-specific regulatory proteins to the basal RNA polymerase II transcription machinery. Mediator is recruited to promoters by direct interactions with regulatory proteins and serves as a scaffold for the assembly of a functional preinitiation complex with RNA polymerase II and the general transcription factors. The protein is Mediator of RNA polymerase II transcription subunit 10 (nut2) of Neurospora crassa (strain ATCC 24698 / 74-OR23-1A / CBS 708.71 / DSM 1257 / FGSC 987).